A 539-amino-acid polypeptide reads, in one-letter code: MRITEILALFMVLVPVSLVIVAMFGYDQGNGFVQASRFITMEPNVTSSSDDSSLVQRDQEQKDSVDMSLLGGLLVSGFKKESCLSRYQSYLYRKASPYKPSLHLLSKLRAYEELHKRCGPGTRQYTNAERLLKQKQTGEMESQGCKYVVWMSFSGLGNRIISIASVFLYAMLTDRVLLVEGGEQFADLFCEPFLDTTWLLPKDFTLASQFSGFGQNSAHCHGDMLKRKLINESSVSSLSHLYLHLAHDYNEHDKMFFCEEDQNLLKNVPWLIMRTNNFFAPSLFLISSFEEELGMMFPEKGTVFHHLGRYLFHPSNQVWGLITRYYQAYLAKADERIGLQIRVFDEKSGVSPRVTKQIISCVQNENLLPRLSKGEEQYKQPSEEELKLKSVLVTSLTTGYFEILKTMYWENPTVTRDVIGIHQPSHEGHQQTEKLMHNRKAWAEMYLLSLTDKLVISAWSTFGYVAQGLGGLRAWILYKQENQTNPNPPCGRAMSPDPCFHAPPYYDCKAKKGTDTGNVVPHVRHCEDISWGLKLVDNF.

At 1–5 the chain is on the cytoplasmic side; the sequence is MRITE. A helical; Signal-anchor for type II membrane protein membrane pass occupies residues 6-26; that stretch reads ILALFMVLVPVSLVIVAMFGY. Residues 27–539 are Lumenal-facing; it reads DQGNGFVQAS…SWGLKLVDNF (513 aa). N44, N231, and N482 each carry an N-linked (GlcNAc...) asparagine glycan.

This sequence belongs to the glycosyltransferase 37 family. Expressed in roots, stems, leaves, flowers, siliques and seedlings.

The protein resides in the golgi apparatus. It localises to the golgi stack membrane. The protein operates within protein modification; protein glycosylation. In terms of biological role, may be involved in cell wall biosynthesis. May act as a fucosyltransferase. This is Fucosyltransferase 2 (FUT2) from Arabidopsis thaliana (Mouse-ear cress).